A 128-amino-acid chain; its full sequence is Large ribosomal subunit protein mL51 (128 aa).

Residues M1 to L31 constitute a mitochondrion transit peptide.

The protein belongs to the mitochondrion-specific ribosomal protein mL51 family. As to quaternary structure, component of the mitochondrial large ribosomal subunit (mt-LSU). Mature mammalian 55S mitochondrial ribosomes consist of a small (28S) and a large (39S) subunit. The 28S small subunit contains a 12S ribosomal RNA (12S mt-rRNA) and 30 different proteins. The 39S large subunit contains a 16S rRNA (16S mt-rRNA), a copy of mitochondrial valine transfer RNA (mt-tRNA(Val)), which plays an integral structural role, and 52 different proteins. Interacts with OXA1L.

It is found in the mitochondrion. The polypeptide is Large ribosomal subunit protein mL51 (MRPL51) (Homo sapiens (Human)).